The following is a 125-amino-acid chain: Holo-[acyl-carrier-protein] synthase (125 aa).

Mg(2+) is bound by residues Asp8 and Glu56.

The protein belongs to the P-Pant transferase superfamily. AcpS family. It depends on Mg(2+) as a cofactor.

It localises to the cytoplasm. It carries out the reaction apo-[ACP] + CoA = holo-[ACP] + adenosine 3',5'-bisphosphate + H(+). In terms of biological role, transfers the 4'-phosphopantetheine moiety from coenzyme A to a Ser of acyl-carrier-protein. The chain is Holo-[acyl-carrier-protein] synthase from Borrelia turicatae (strain 91E135).